A 557-amino-acid polypeptide reads, in one-letter code: Multidrug transporter FLR1 (557 aa).

N-linked (GlcNAc...) asparagine glycosylation is found at Asn-33, Asn-48, and Asn-106. Residues 44–57 (SESSNMSFNSGSEE) show a composition bias toward low complexity. Positions 44–67 (SESSNMSFNSGSEENSQEKSVEDL) are disordered. 8 consecutive transmembrane segments (helical) span residues 113-133 (ALIIIQTMLLTCVNYMGSSIY), 149-169 (VVGTLNLSLYVLGYGLGPIVF), 181-201 (LPVYMITFFLFTMLQIGCALA), 204-224 (FAGLVILRFITGVLCSPALST), 238-258 (LALVLGLWSIGAVAAPVLAPL), 271-291 (WIFWLLFFCCCATMLLLTFFF), 355-375 (LYIALCYGAFYLFFEAFPIVF), and 387-407 (GLAYFGFCVGCIFAYIILLVF). The N-linked (GlcNAc...) asparagine glycan is linked to Asn-418. The next 4 helical transmembrane spans lie at 426–446 (TLILAMCIGWCIPLALFMFGW), 450–470 (VHWILPIISEVFFVLGCFNIF), 484–506 (YVASVFAGNGFARSSFAAAFPLF), and 521–541 (VAWGSSLVGFFTIGLWVIPFV).

Belongs to the major facilitator superfamily.

It localises to the cell membrane. Functionally, multidrug transporter that confers resistance to 5-flucytosine (5-FC) and clotrimazole. Also confers resistance to benomyl, but not 4-nitroquinoline-N-oxide, cycloheximide, or fluconazole. Plays direct roles in extrusion of 5-flucytosine and clotrimazole. The protein is Multidrug transporter FLR1 of Candida glabrata (strain ATCC 2001 / BCRC 20586 / JCM 3761 / NBRC 0622 / NRRL Y-65 / CBS 138) (Yeast).